A 306-amino-acid polypeptide reads, in one-letter code: tRNA dimethylallyltransferase (306 aa).

Residue 13–20 participates in ATP binding; that stretch reads GPTGAGKT. 15-20 lines the substrate pocket; the sequence is TGAGKT. Interaction with substrate tRNA regions lie at residues 38 to 41 and 161 to 165; these read DSRQ and QRNAR.

The protein belongs to the IPP transferase family. As to quaternary structure, monomer. It depends on Mg(2+) as a cofactor.

The enzyme catalyses adenosine(37) in tRNA + dimethylallyl diphosphate = N(6)-dimethylallyladenosine(37) in tRNA + diphosphate. In terms of biological role, catalyzes the transfer of a dimethylallyl group onto the adenine at position 37 in tRNAs that read codons beginning with uridine, leading to the formation of N6-(dimethylallyl)adenosine (i(6)A). This Maridesulfovibrio salexigens (strain ATCC 14822 / DSM 2638 / NCIMB 8403 / VKM B-1763) (Desulfovibrio salexigens) protein is tRNA dimethylallyltransferase.